The primary structure comprises 294 residues: Non-selective voltage-gated ion channel VDAC2 (294 aa).

N-acetylalanine is present on Ala-2. The ATP site is built by Lys-23 and Lys-31. An N6-acetyllysine; alternate modification is found at Lys-31. Residue Lys-31 is modified to N6-succinyllysine; alternate. A Glycyl lysine isopeptide (Lys-Gly) (interchain with G-Cter in ubiquitin); alternate cross-link involves residue Lys-31. 2 beta stranded membrane-spanning segments follow: residues 37–46 (LVKLDVKTKS) and 50–58 (VEFSTSGSS). Lys-64 is covalently cross-linked (Glycyl lysine isopeptide (Lys-Gly) (interchain with G-Cter in ubiquitin)). A beta stranded membrane pass occupies residues 65 to 75 (VTGTLETKYKW). Tyr-78 is modified (phosphotyrosine). The next 3 membrane-spanning stretches (beta stranded) occupy residues 80–87 (LTFTEKWN), 91–100 (TLGTEIAIED), and 106–115 (LKLTFDTTFS). Thr-118 carries the phosphothreonine modification. Lys-120 is subject to N6-acetyllysine; alternate. Lys-120 is covalently cross-linked (Glycyl lysine isopeptide (Lys-Gly) (interchain with G-Cter in ubiquitin); alternate). A Glycyl lysine isopeptide (Lys-Gly) (interchain with G-Cter in ubiquitin) cross-link involves residue Lys-121. 4 beta stranded membrane passes run 122–131 (SGKIKSSYKR), 134–141 (INLGCDVD), 148–156 (AIHGSAVFG), and 161–169 (LAGYQMTFD). Lys-172 is covalently cross-linked (Glycyl lysine isopeptide (Lys-Gly) (interchain with G-Cter in ubiquitin)). Transmembrane regions (beta stranded) follow at residues 174–186 (KLTR…GYRT), 189–196 (FQLHTNVN), 200–209 (EFGGSIYQKV), 213–222 (LDTSVNLAWT), 229–238 (RFGIAAKYQL), and 242–249 (ASISAKVN). Ser-251 bears the Phosphoserine mark. Residues 253–255 (LIG) and 271–275 (SALVD) each bind NAD(+). 2 beta stranded membrane passes run 253-262 (LIGVGYTQTL) and 265-274 (GVKLTLSALV). Lys-277 is modified (N6-acetyllysine; alternate). A Glycyl lysine isopeptide (Lys-Gly) (interchain with G-Cter in ubiquitin); alternate cross-link involves residue Lys-277. A beta stranded transmembrane segment spans residues 284 to 293 (HKLGLALELE).

This sequence belongs to the eukaryotic mitochondrial porin family. Monomer, homodimer and higher order oligomers; formation of higher order structures is necessary for scramblase activity. Interacts with ARMC12 in a TBC1D21-dependent manner. Interacts with KLC3. Interacts with SPATA33. Interacts with PPP3CC in a SPATA33-dependent manner. Ubiquitinated by PRKN during mitophagy, leading to its degradation and enhancement of mitophagy. Deubiquitinated by USP30.

The protein resides in the mitochondrion outer membrane. It localises to the membrane. It carries out the reaction chloride(in) = chloride(out). The enzyme catalyses K(+)(in) = K(+)(out). It catalyses the reaction a 1,2-diacyl-sn-glycero-3-phospho-L-serine(in) = a 1,2-diacyl-sn-glycero-3-phospho-L-serine(out). The catalysed reaction is a 1,2-diacyl-sn-glycero-3-phosphocholine(in) = a 1,2-diacyl-sn-glycero-3-phosphocholine(out). It carries out the reaction a 1,2-diacyl-sn-glycero-3-phospho-(1D-myo-inositol)(in) = a 1,2-diacyl-sn-glycero-3-phospho-(1D-myo-inositol)(out). Functionally, non-selective voltage-gated ion channel that mediates the transport of anions and cations through the mitochondrion outer membrane and plasma membrane. The channel adopts an open conformation at zero mV and a closed conformation at both positive and negative potentials. There are two populations of channels; the main that functions in a lower open-state conductance with lower ion selectivity, that switch, in a voltage-dependent manner, from the open to a low-conducting 'closed' state and the other that has a normal ion selectivity in the typical high conductance, 'open' state. Binds various lipids, including the sphingolipid ceramide, the phospholipid phosphatidylcholine, and the sterols cholesterol and oxysterol. Binding of ceramide promotes the mitochondrial outer membrane permeabilization (MOMP) apoptotic pathway. Its function is as follows. Catalyzes the scrambling of phospholipids across the outer mitochondrial membrane; the mechanism is unrelated to channel activity and is capable of translocating both anionic and zwitterionic phospholipids. The polypeptide is Non-selective voltage-gated ion channel VDAC2 (Bos taurus (Bovine)).